The sequence spans 500 residues: Probable cardiolipin synthase YwiE (500 aa).

3 helical membrane passes run 6–26 (LEFF…FFPV), 31–51 (FYGG…SLIL), and 59–79 (TLLW…FYLF). 2 consecutive PLD phosphodiesterase domains span residues 237–264 (LNFR…GKEY) and 413–440 (QKGF…DMRS). Active-site residues include His-242, Lys-244, Asp-249, His-418, Lys-420, and Asp-425.

It belongs to the phospholipase D family. Cardiolipin synthase subfamily.

The protein resides in the cell membrane. The enzyme catalyses 2 a 1,2-diacyl-sn-glycero-3-phospho-(1'-sn-glycerol) = a cardiolipin + glycerol. Functionally, catalyzes the reversible phosphatidyl group transfer from one phosphatidylglycerol molecule to another to form cardiolipin (CL) (diphosphatidylglycerol) and glycerol. May have a role in the heat shock response since the level of the transcript of ywiE increases after a heat shock. This Bacillus subtilis (strain 168) protein is Probable cardiolipin synthase YwiE (ywiE).